We begin with the raw amino-acid sequence, 275 residues long: Phosphate import ATP-binding protein PstB (275 aa).

In terms of domain architecture, ABC transporter spans 28–270; that stretch reads IDCRDIRVFY…PREKRTEDYI (243 aa). 60–67 contacts ATP; it reads GPSGCGKS.

This sequence belongs to the ABC transporter superfamily. Phosphate importer (TC 3.A.1.7) family. The complex is composed of two ATP-binding proteins (PstB), two transmembrane proteins (PstC and PstA) and a solute-binding protein (PstS).

It is found in the cell inner membrane. It carries out the reaction phosphate(out) + ATP + H2O = ADP + 2 phosphate(in) + H(+). Its function is as follows. Part of the ABC transporter complex PstSACB involved in phosphate import. Responsible for energy coupling to the transport system. The sequence is that of Phosphate import ATP-binding protein PstB from Hyphomonas neptunium (strain ATCC 15444).